The chain runs to 398 residues: MASGINQAAGKLPAIAKKVQNLGDMGVWQKSRAFHDLIGYINGTSSAIQGIKTTDEIFESEMLKKLLRLFDALEKLVEQNPPLEQPQRFGNKAYRDWAQAMRELLPELLEQLLPDDKKRYQVELGQYLTESFGNATRIDYGTGHELSFLFFLCSLFKAEILQERDIVSAALRLFNRYLELARQLQRTYNMEPAGSQGVWSLDDFQFVPFIWGSAQLAVKSPFDPSKFVDEAIITEYKDHFMFISCIDYICKVKTGHFGEHSNQLWSITDVPTWAKINAGLVKMYQKEILSKFPVIQHVYFGELMTFEPVSSGTTLSNARLGHVAPPPSKRICIGTPNLVPPVPVATAPPPPAESLSIEQNVGDSSSESSDNSVVLRPSTSSSSLVAAAEGSGDKPSKE.

ATP is bound by residues arginine 137, threonine 142, and glycine 143. Positions 197 and 203 each coordinate Mg(2+). Residues proline 293, glutamine 296, and histidine 297 each coordinate ATP. Pro residues predominate over residues 343-352; the sequence is PVATAPPPPA. The tract at residues 343-398 is disordered; that stretch reads PVATAPPPPAESLSIEQNVGDSSSESSDNSVVLRPSTSSSSLVAAAEGSGDKPSKE. Over residues 363–388 the composition is skewed to low complexity; that stretch reads DSSSESSDNSVVLRPSTSSSSLVAAA.

This sequence belongs to the PTPA-type PPIase family. In terms of assembly, associates with PP2A heterodimeric core enzyme PP2A(D), composed of a catalytic subunit (subunit C) and a constant regulatory subunit (PR65 or subunit A). Interacts with the catalytic subunit Pp4-19C of the serine/threonine-protein phosphatase 4 (PP4) complex; thereby mediating basal localization of the Miranda (Mira) complex; probably by facilitating the dephosphorylation of Mira.

The protein localises to the cytoplasm. Its subcellular location is the nucleus. It carries out the reaction [protein]-peptidylproline (omega=180) = [protein]-peptidylproline (omega=0). PPIases accelerate the folding of proteins. It catalyzes the cis-trans isomerization of proline imidic peptide bonds in oligopeptides. Acts as a regulatory subunit for serine/threonine-protein phosphatase 2A (PP2A). Modulates PP2A activity or substrate specificity, probably by inducing a conformational change in the catalytic subunit, a proposed direct target of the PPIase. Acts as mediator for the basal localization of the Miranda (Mira) complex during mitosis of larval neuroblast asymmetric division. Associates with the phosphatase 4 (PP4) complex to mediate basal localization of Mira; probably by facilitating the dephosphorylation of Mira. Cortical association of Mira mediated by the PTPA-PP4 complex seems to be independent of aPKC activity. This is Serine/threonine-protein phosphatase 2A activator from Drosophila melanogaster (Fruit fly).